The primary structure comprises 140 residues: Small ribosomal subunit protein uS12 (140 aa).

Pro59 carries the hydroxyproline modification.

Belongs to the universal ribosomal protein uS12 family.

This is Small ribosomal subunit protein uS12 (RPS23) from Encephalitozoon cuniculi (strain GB-M1) (Microsporidian parasite).